A 117-amino-acid chain; its full sequence is Ig heavy chain V region 23 (117 aa).

Residues 1 to 19 (MGWSCIILFLVAAANGVHS) form the signal peptide. A framework-1 region spans residues 20 to 49 (QVQLQQPGTELVKPGASVKLSCKASGYTFT). A disulfide bond links Cys-41 and Cys-115. Residues 50–54 (SYWMH) are complementarity-determining-1. The interval 55–68 (WVKQRPGQGLEWIG) is framework-2. Residues 69-85 (NINPGNGGTNYNEKFKS) are complementarity-determining-2. Residues 86-117 (KVTLTVDKSSSTAYTQLSSLTSEDSAVYYCAR) form a framework-3 region.

The polypeptide is Ig heavy chain V region 23 (Mus musculus (Mouse)).